The chain runs to 325 residues: 5-dehydro-2-deoxygluconokinase (325 aa).

Belongs to the carbohydrate kinase PfkB family.

The catalysed reaction is 5-dehydro-2-deoxy-D-gluconate + ATP = 6-phospho-5-dehydro-2-deoxy-D-gluconate + ADP + H(+). The protein operates within polyol metabolism; myo-inositol degradation into acetyl-CoA; acetyl-CoA from myo-inositol: step 5/7. Functionally, catalyzes the phosphorylation of 5-dehydro-2-deoxy-D-gluconate (2-deoxy-5-keto-D-gluconate or DKG) to 6-phospho-5-dehydro-2-deoxy-D-gluconate (DKGP). This chain is 5-dehydro-2-deoxygluconokinase, found in Listeria monocytogenes serotype 4b (strain CLIP80459).